Consider the following 395-residue polypeptide: uncharacterized protein (395 aa).

4 disordered regions span residues 1–121 (MLLP…TANS), 136–187 (MRMK…LDRN), 308–335 (QNNEDTIRKSVPPSREPGSKMMTVSKDE), and 365–395 (IQKFRKKYQKQLKKSQEEKKDDTKTAKNEGD). The segment covering 13–28 (PKGEAKSLVARERKSQ) has biased composition (basic and acidic residues). Over residues 64–73 (KSAKLRRKKS) the composition is skewed to basic residues. Residues 97–111 (SIEKKKEEMTSKLPE) are compositionally biased toward basic and acidic residues. The segment covering 144–164 (TSRMATKSDSSLETMPESSHN) has biased composition (polar residues). Residues 170–179 (KSRKSQRTRG) show a composition bias toward basic residues. The segment covering 365 to 377 (IQKFRKKYQKQLK) has biased composition (basic residues). Basic and acidic residues predominate over residues 378-395 (KSQEEKKDDTKTAKNEGD).

This is an uncharacterized protein from Caenorhabditis elegans.